We begin with the raw amino-acid sequence, 318 residues long: Ribosomal RNA small subunit methyltransferase H (318 aa).

S-adenosyl-L-methionine-binding positions include 37 to 39 (GGH), D57, F83, D104, and Q111.

This sequence belongs to the methyltransferase superfamily. RsmH family.

It localises to the cytoplasm. The enzyme catalyses cytidine(1402) in 16S rRNA + S-adenosyl-L-methionine = N(4)-methylcytidine(1402) in 16S rRNA + S-adenosyl-L-homocysteine + H(+). In terms of biological role, specifically methylates the N4 position of cytidine in position 1402 (C1402) of 16S rRNA. This chain is Ribosomal RNA small subunit methyltransferase H, found in Neisseria gonorrhoeae (strain ATCC 700825 / FA 1090).